Reading from the N-terminus, the 345-residue chain is S-adenosylmethionine:tRNA ribosyltransferase-isomerase (345 aa).

It belongs to the QueA family. In terms of assembly, monomer.

Its subcellular location is the cytoplasm. The enzyme catalyses 7-aminomethyl-7-carbaguanosine(34) in tRNA + S-adenosyl-L-methionine = epoxyqueuosine(34) in tRNA + adenine + L-methionine + 2 H(+). It participates in tRNA modification; tRNA-queuosine biosynthesis. Functionally, transfers and isomerizes the ribose moiety from AdoMet to the 7-aminomethyl group of 7-deazaguanine (preQ1-tRNA) to give epoxyqueuosine (oQ-tRNA). The sequence is that of S-adenosylmethionine:tRNA ribosyltransferase-isomerase from Acinetobacter baumannii (strain ATCC 17978 / DSM 105126 / CIP 53.77 / LMG 1025 / NCDC KC755 / 5377).